The following is a 187-amino-acid chain: Protein lethal(2)essential for life (187 aa).

The 110-residue stretch at 61 to 170 (NSLQKQESGS…TERLVQITQT (110 aa)) folds into the sHSP domain. The segment at 151 to 187 (APMKALPPPQTERLVQITQTGPSSKEDNAKKVETSTA) is disordered. A compositionally biased stretch (basic and acidic residues) spans 174 to 187 (SKEDNAKKVETSTA).

It belongs to the small heat shock protein (HSP20) family. Ubiquitously expressed during embryogenesis with no sign of tissue specificity in expression up to stage 16.

Functionally, vital role in embryonic development. This chain is Protein lethal(2)essential for life (l(2)efl), found in Drosophila melanogaster (Fruit fly).